Here is a 96-residue protein sequence, read N- to C-terminus: Teretoxin Tgu6.1 (96 aa).

Positions 1-16 (MRPFLVFVLIVSVSLA) are cleaved as a signal peptide. The propeptide occupies 17 to 52 (FSFEDMPNKGGDSVASITADQARGHKRNPLFPFAQR).

Post-translationally, contains 3 disulfide bonds. In terms of tissue distribution, expressed by the venom duct.

Its subcellular location is the secreted. Its function is as follows. The recombinant protein causes paralysis to polychaete worms (Nereis virens), the natural prey of terebrid snails. This is Teretoxin Tgu6.1 from Terebra guttata (White spotted auger snail).